The primary structure comprises 247 residues: PABIR family member 2 (247 aa).

Residues 1–23 (MAQEKMELDLEPDTSYGGTLRRS) are disordered. A2 carries the post-translational modification N-acetylalanine. Residues S25, S33, S50, S58, and L63 each carry the phosphoserine modification. The segment at 82 to 104 (ISQSWDESLSLSDSDFDKPEKLY) is disordered. The span at 83 to 94 (SQSWDESLSLSD) shows a compositional bias: low complexity. Position 112 is a phosphothreonine (T112). A phosphoserine mark is found at S115 and S119. R122 is subject to Omega-N-methylarginine. Disordered regions lie at residues 129 to 152 (VSSS…SQSP), 158 to 177 (PSVL…SQPK), and 202 to 230 (DILD…SPVA). S137 and S141 each carry phosphoserine. The segment covering 166-176 (RKGEMETESQP) has biased composition (basic and acidic residues). Low complexity predominate over residues 202 to 216 (DILDGSSSSSGLSSD).

It belongs to the FAM122 family. Post-translationally, isoform 3 and isoform 4 are phosphorylated on Ser-62 and Ser-64.

The polypeptide is PABIR family member 2 (Homo sapiens (Human)).